The following is a 1165-amino-acid chain: Tectonin beta-propeller repeat-containing protein 1 (1165 aa).

4 TECPR repeats span residues 209–240 (LSVW…SLLD), 254–285 (DLLW…SIVE), 301–332 (SVVW…IEMV), and 344–376 (DQVW…KAII). Phosphoserine occurs at positions 386, 388, 391, 412, and 417. The segment at 404 to 486 (RGSGESAPSD…GPAPTPAELP (83 aa)) is disordered. Residues 611–717 (KTGALQWWCD…WLALLSLSCC (107 aa)) form the PH domain. Residues 729-756 (QAIWSITCKGDIFVSEPSPDLEAHEHPL) form a TECPR 5 repeat. Ser938 and Ser949 each carry phosphoserine. 4 TECPR repeats span residues 953 to 984 (IALW…LHVG), 998 to 1029 (YQVW…YHIP), 1044 to 1075 (TSVY…EHVS), and 1087 to 1127 (DQVW…DYGI). Positions 1140–1165 (ATRAPRSSSQEQEPSAPPEAHGPVCC) are disordered. Low complexity predominate over residues 1143-1153 (APRSSSQEQEP).

The protein belongs to the TECPR1 family. As to quaternary structure, interacts with ATG5; the interaction is direct. Interacts with WIPI2. Interacts with the ATG5-ATG12 conjugate, the interaction is however mutually exclusive with ATG16, since it does not interact with ATG12-ATG5-ATG16 complex.

Its subcellular location is the cytoplasmic vesicle. The protein resides in the autophagosome membrane. It localises to the lysosome membrane. Functionally, tethering factor involved in autophagy. Involved in autophagosome maturation by promoting the autophagosome fusion with lysosomes: acts by associating with both the ATG5-ATG12 conjugate and phosphatidylinositol-3-phosphate (PtdIns(3)P) present at the surface of autophagosomes. Also involved in selective autophagy against bacterial pathogens, by being required for phagophore/preautophagosomal structure biogenesis and maturation. The protein is Tectonin beta-propeller repeat-containing protein 1 (TECPR1) of Homo sapiens (Human).